A 211-amino-acid polypeptide reads, in one-letter code: 2,3-bisphosphoglycerate-dependent phosphoglycerate mutase (211 aa).

Residues 9–16, 22–23, R61, 88–91, K99, 115–116, and 159–160 each bind substrate; these read RHGQSEWN, TG, ERDY, RR, and GN. H10 acts as the Tele-phosphohistidine intermediate in catalysis. Catalysis depends on E88, which acts as the Proton donor/acceptor.

This sequence belongs to the phosphoglycerate mutase family. BPG-dependent PGAM subfamily. Homodimer.

The enzyme catalyses (2R)-2-phosphoglycerate = (2R)-3-phosphoglycerate. Its pathway is carbohydrate degradation; glycolysis; pyruvate from D-glyceraldehyde 3-phosphate: step 3/5. Catalyzes the interconversion of 2-phosphoglycerate and 3-phosphoglycerate. This Sinorhizobium fredii (strain NBRC 101917 / NGR234) protein is 2,3-bisphosphoglycerate-dependent phosphoglycerate mutase.